A 176-amino-acid polypeptide reads, in one-letter code: Lipoprotein signal peptidase (176 aa).

4 helical membrane passes run 10–30 (LFQF…AIVL), 48–68 (VPVL…AFSF), 78–98 (YFFT…LLRM), and 102–122 (MVVL…NLID). Active-site residues include Asp131 and Asp149. A helical membrane pass occupies residues 141 to 161 (HFPAFNIADSAITLGTILLLI).

Belongs to the peptidase A8 family.

It localises to the cell inner membrane. It catalyses the reaction Release of signal peptides from bacterial membrane prolipoproteins. Hydrolyzes -Xaa-Yaa-Zaa-|-(S,diacylglyceryl)Cys-, in which Xaa is hydrophobic (preferably Leu), and Yaa (Ala or Ser) and Zaa (Gly or Ala) have small, neutral side chains.. Its pathway is protein modification; lipoprotein biosynthesis (signal peptide cleavage). Its function is as follows. This protein specifically catalyzes the removal of signal peptides from prolipoproteins. This chain is Lipoprotein signal peptidase, found in Acinetobacter baumannii (strain ATCC 17978 / DSM 105126 / CIP 53.77 / LMG 1025 / NCDC KC755 / 5377).